Reading from the N-terminus, the 168-residue chain is Cyclic pyranopterin monophosphate synthase (168 aa).

Substrate contacts are provided by residues Met-75–His-77 and Met-115–Glu-116. Asp-130 is a catalytic residue.

It belongs to the MoaC family. As to quaternary structure, homohexamer; trimer of dimers.

The enzyme catalyses (8S)-3',8-cyclo-7,8-dihydroguanosine 5'-triphosphate = cyclic pyranopterin phosphate + diphosphate. The protein operates within cofactor biosynthesis; molybdopterin biosynthesis. Catalyzes the conversion of (8S)-3',8-cyclo-7,8-dihydroguanosine 5'-triphosphate to cyclic pyranopterin monophosphate (cPMP). This is Cyclic pyranopterin monophosphate synthase from Bacillus licheniformis (strain ATCC 14580 / DSM 13 / JCM 2505 / CCUG 7422 / NBRC 12200 / NCIMB 9375 / NCTC 10341 / NRRL NRS-1264 / Gibson 46).